A 364-amino-acid chain; its full sequence is MEVIDLFKKLLSFPSITPDDAGSLEFIREYLSDFHALWFNKHGVKNLFLYKKFGEGEHLCFAGHVDVVPPGDGWESDPFEPLEKDGFIYARGAQDMKSGVAAFVQAVKEAKVFHGTLSLLLTSDEEGEAKWGTKYALEELERMHMTPQYAIVAEPTCEERFGDAIKIGRRGSINGVIEKIGKQGHAAYPEKAVNPIHKVAQVLPKMAGVDLDSGDEYFAPSKFVITDIRAGMEVTNVTPGRLKMMFNVRNNTKTTMQDVERFVHRYFDGMNYTLKLSQSAKPFLTDPNSKVVQVIDQAIKKMTGITPKHSTAGGTSDARFFAEYGVKTIEFGVKNDTIHAPNERTSKEEVEKLYLVFKEVIRSF.

H64 contributes to the Zn(2+) binding site. D66 is a catalytic residue. Residue D95 participates in Zn(2+) binding. The Proton acceptor role is filled by E125. Positions 126, 154, and 339 each coordinate Zn(2+).

It belongs to the peptidase M20A family. DapE subfamily. Homodimer. It depends on Zn(2+) as a cofactor. Co(2+) is required as a cofactor.

It carries out the reaction N-succinyl-(2S,6S)-2,6-diaminopimelate + H2O = (2S,6S)-2,6-diaminopimelate + succinate. It participates in amino-acid biosynthesis; L-lysine biosynthesis via DAP pathway; LL-2,6-diaminopimelate from (S)-tetrahydrodipicolinate (succinylase route): step 3/3. Catalyzes the hydrolysis of N-succinyl-L,L-diaminopimelic acid (SDAP), forming succinate and LL-2,6-diaminopimelate (DAP), an intermediate involved in the bacterial biosynthesis of lysine and meso-diaminopimelic acid, an essential component of bacterial cell walls. The chain is Succinyl-diaminopimelate desuccinylase from Nitratiruptor sp. (strain SB155-2).